The chain runs to 300 residues: ClpXP adapter protein SpxH (300 aa).

It belongs to the SpxH family. In terms of assembly, interacts with Spx.

It is found in the cytoplasm. In terms of biological role, adapter protein required for efficient degradation of Spx by ClpXP under non-stress conditions. Interaction with Spx stabilizes Spx and exposes the C-terminus of Spx for recognition and proteolysis by ClpXP. The chain is ClpXP adapter protein SpxH from Bacillus licheniformis (strain ATCC 14580 / DSM 13 / JCM 2505 / CCUG 7422 / NBRC 12200 / NCIMB 9375 / NCTC 10341 / NRRL NRS-1264 / Gibson 46).